The chain runs to 362 residues: Histidinol-phosphate aminotransferase (362 aa).

Residue lysine 211 is modified to N6-(pyridoxal phosphate)lysine.

The protein belongs to the class-II pyridoxal-phosphate-dependent aminotransferase family. Histidinol-phosphate aminotransferase subfamily. In terms of assembly, homodimer. The cofactor is pyridoxal 5'-phosphate.

It catalyses the reaction L-histidinol phosphate + 2-oxoglutarate = 3-(imidazol-4-yl)-2-oxopropyl phosphate + L-glutamate. Its pathway is amino-acid biosynthesis; L-histidine biosynthesis; L-histidine from 5-phospho-alpha-D-ribose 1-diphosphate: step 7/9. The protein is Histidinol-phosphate aminotransferase of Serratia proteamaculans (strain 568).